The sequence spans 149 residues: Transcription factor Atoh7 (149 aa).

Residues 41–93 (RRRLAANARERRRMQGLNTAFDRLRRVVPQWGQDKKLSKYETLQMALSYIIAL) form the bHLH domain.

In terms of assembly, forms a heterodimer with TCF3 isoform E47; interaction may be required for DNA-binding in certain situations. Expressed in retinal ganglion cells. Expressed in the cerebellum, trapezoid body, ventral nucleus of the lateral lamniscus and in areas of the auditory hindbrain such as the cochlear nucleus, lateral superior olive and medial nucleus of the trapezoid body. Expressed in the modiolar nerve root and in the cochlear in a small group of bushy neurons within the acoustic nerve. Expressed weakly in the sensory epithelia of the saccule and utricle.

The protein localises to the nucleus. It is found in the perikaryon. It localises to the cell projection. The protein resides in the axon. Functionally, transcription factor that binds to DNA at the consensus sequence 5'-CAG[GC]TG-3'. Dimerization with TCF3 isoform E47 may be required in certain situations. Binds to gene promoters and enhancer elements, and thereby regulates a transcriptional program of retinal ganglion cell (RGC) determinant genes. Although the exact mechanism is not certain, retinal transcription regulation by ATOH7 has a role in RGC determination and survival, photoreceptor population development, targeting of RGC axons to the optic nerve and development of the retino-hypothalamic tract. Binds to its own promoter and enhancer sequences, suggesting autoregulation of ATOH7 transcription. Required for retinal circadian rhythm photoentrainment. Plays a role in brainstem auditory signaling and binaural processing. The chain is Transcription factor Atoh7 from Mus musculus (Mouse).